A 1790-amino-acid polypeptide reads, in one-letter code: Non-reducing polyketide synthase gsfA (1790 aa).

The segment at 20-263 (GDQRTLFRKL…AMRKIQGMWH (244 aa)) is N-terminal acylcarrier protein transacylase domain (SAT). The Ketosynthase family 3 (KS3) domain maps to 392–822 (SSKIAVVGMS…GGNTAMIIEE (431 aa)). Active-site for beta-ketoacyl synthase activity residues include Cys563, His698, and His741. The malonyl-CoA:ACP transacylase (MAT) domain stretch occupies residues 922 to 1223 (FAFAGQGTFY…CSTLHRDSDN (302 aa)). Positions 1298–1615 (TSSIHRLYSE…PRIMLNRFFQ (318 aa)) are product template (PT) domain. The tract at residues 1302 to 1435 (HRLYSENYDS…AYYEDPSTWL (134 aa)) is N-terminal hotdog fold. Residues 1302-1611 (HRLYSENYDS…FRQWPRIMLN (310 aa)) enclose the PKS/mFAS DH domain. His1334 functions as the Proton acceptor; for dehydratase activity in the catalytic mechanism. The C-terminal hotdog fold stretch occupies residues 1460-1611 (MANKLTTSLA…FRQWPRIMLN (152 aa)). Catalysis depends on Asp1518, which acts as the Proton donor; for dehydratase activity. Disordered regions lie at residues 1621–1648 (PPAP…EKTT) and 1686–1718 (LDYS…ADGA). Residues 1699–1708 (SDERIEKTDS) are compositionally biased toward basic and acidic residues. The Carrier domain occupies 1716 to 1790 (DGANDVTSRA…TIGDLKKLLS (75 aa)). Ser1753 bears the O-(pantetheine 4'-phosphoryl)serine mark.

The catalysed reaction is 6 malonyl-CoA + acetyl-CoA + 4 H(+) = 2-(2,4-dihydroxy-6-oxidobenzoyl)-5-hydroxy-3-methylbenzenolate + 6 CO2 + 7 CoA + H2O. Its pathway is secondary metabolite biosynthesis; terpenoid biosynthesis. Functionally, norlichexanthone synthase; part of the gene cluster that mediates the biosynthesis of griseofulvin, an important antifungal drug that has been in use for a long time for treating dermatophyte infections. The first step of the pathway is the formation of the heptaketide backbone by gsfA which is initiated by priming with acetyl-CoA, followed by sequential condensations of 6 malonyl-CoA units. The resulting benzophenone can undergo a spontaneous dehydration to form norlichexanthone. However, the true precursor for the griseofulvin biosynthesis is not norlichexanthone, but the heptaketide benzophenone that is O-methylated at 3-OH by gsfB to produce griseophenone D which is further methylated at 9-OH by gsfC to yield griseophenone C. Griseophenone C is then substrate of halogenase gsfI which is responsible for the regio-specific chlorination at the C13 position to form griseophenone B. The cytochrome P450 gsfF catalyzes the coupling of orcinol and phloroglucinol rings in griseophenone B to form desmethyl-dehydrogriseofulvin A which is further methylated at 5-OH by gsfD to yield dehydrogriseofulvin. Finally, gsfE performs stereospecific reduction of enone 18 of dehydrogriseofulvin to afford the final product griseofulvin. This is Non-reducing polyketide synthase gsfA from Penicillium aethiopicum.